A 95-amino-acid polypeptide reads, in one-letter code: RING finger protein Z (95 aa).

Residue G2 is the site of N-myristoyl glycine; by host attachment. An RING-type; atypical zinc finger spans residues 38–74 (CKSCWFANKGLLKCSNHYLCLKCLTLMLRRSDYCGIC). The PTAP/PSAP motif motif lies at 88 to 91 (PSAP).

This sequence belongs to the arenaviridae Z protein family. Interacts with protein NP; this interaction probably directs the encapsidated genome to budding sites. Interacts (via RING domain) with polymerase L; this interaction inhibits viral transcription and replication, Z partially blocks the product exit tunnel for the releasing nascent RNA product. Interacts with the glycoprotein complex; this interaction plays a role in virion budding. Interacts with host eIF4E; this interaction results in eIF4E reduced affinity for its substrate, the 5'-m7 G cap structure. Interacts (via late-budding domain) with host TSG101; this interaction is essential for budding and release of viral particles. Interacts with host RPLP0; this interaction may serve to load ribosome-like particles inside the virion. Interacts with host PML; this interaction induces PML bodies redistribution in the cytoplasm upon viral infection. Post-translationally, myristoylation is required for the role of RING finger protein Z in assembly and budding.

It is found in the virion. It localises to the host cytoplasm. The protein localises to the host perinuclear region. Its subcellular location is the host cell membrane. In terms of biological role, plays a crucial role in virion assembly and budding. Expressed late in the virus life cycle, it acts as an inhibitor of viral transcription and RNA synthesis by interacting with the viral polymerase L. Presumably recruits the NP encapsidated genome to cellular membranes at budding sites via direct interaction with NP. Plays critical roles in the final steps of viral release by interacting with host TSG101, a member of the vacuolar protein-sorting pathway and using other cellular host proteins involved in vesicle formation pathway. The budding of the virus progeny occurs after association of protein Z with the viral glycoprotein complex SSP-GP1-GP2 at the cell periphery, step that requires myristoylation of protein Z. Also selectively represses protein production by associating with host eIF4E. In cell-based minigenome assay, has an inhibitory effect on the ribonucleoprotein machinery (vRNP), which is responsible for the replication and transcription of the viral genome. In Neotoma (wood rats), this protein is RING finger protein Z.